Consider the following 208-residue polypeptide: Thymidylate kinase (208 aa).

Residue 10 to 17 coordinates ATP; that stretch reads GGEGVGKS.

Belongs to the thymidylate kinase family.

It catalyses the reaction dTMP + ATP = dTDP + ADP. In terms of biological role, phosphorylation of dTMP to form dTDP in both de novo and salvage pathways of dTTP synthesis. The chain is Thymidylate kinase from Rhizorhabdus wittichii (strain DSM 6014 / CCUG 31198 / JCM 15750 / NBRC 105917 / EY 4224 / RW1) (Sphingomonas wittichii).